The chain runs to 389 residues: COP9 signalosome complex subunit 11 (389 aa).

The 170-residue stretch at 143-312 folds into the PCI domain; sequence QLIIDIPNLV…ILYQKFDPQM (170 aa).

Component of a COP9 signalosome-like (CSN) complex.

The protein resides in the cytoplasm. It localises to the nucleus. In terms of biological role, component of the COP9 signalosome (CSN) complex that acts as an regulator of the ubiquitin (Ubl) conjugation pathway by mediating the deneddylation of the cullin subunit of SCF-type E3 ubiquitin-protein ligase complexes The CSN complex is involved in the regulation of the mating pheromone response. PCI8 may also be involved in transcriptional and translational control. The chain is COP9 signalosome complex subunit 11 (PCI8) from Kluyveromyces lactis (strain ATCC 8585 / CBS 2359 / DSM 70799 / NBRC 1267 / NRRL Y-1140 / WM37) (Yeast).